A 156-amino-acid chain; its full sequence is Small ribosomal subunit protein uS7 (156 aa).

This sequence belongs to the universal ribosomal protein uS7 family. As to quaternary structure, part of the 30S ribosomal subunit. Contacts proteins S9 and S11.

Its function is as follows. One of the primary rRNA binding proteins, it binds directly to 16S rRNA where it nucleates assembly of the head domain of the 30S subunit. Is located at the subunit interface close to the decoding center, probably blocks exit of the E-site tRNA. This is Small ribosomal subunit protein uS7 from Jannaschia sp. (strain CCS1).